The sequence spans 344 residues: Aspartate-semialdehyde dehydrogenase (344 aa).

Residues 10–13 and 38–39 contribute to the NADP(+) site; these read TGQV and RS. Arg101 lines the phosphate pocket. The Acyl-thioester intermediate role is filled by Cys131. Gln158 is a substrate binding site. An NADP(+)-binding site is contributed by 161 to 162; the sequence is SG. Lys228 lines the phosphate pocket. A substrate-binding site is contributed by Arg250. The Proton acceptor role is filled by His257. Residue Asn326 coordinates NADP(+).

This sequence belongs to the aspartate-semialdehyde dehydrogenase family. As to quaternary structure, homodimer.

The catalysed reaction is L-aspartate 4-semialdehyde + phosphate + NADP(+) = 4-phospho-L-aspartate + NADPH + H(+). It participates in amino-acid biosynthesis; L-lysine biosynthesis via DAP pathway; (S)-tetrahydrodipicolinate from L-aspartate: step 2/4. The protein operates within amino-acid biosynthesis; L-methionine biosynthesis via de novo pathway; L-homoserine from L-aspartate: step 2/3. It functions in the pathway amino-acid biosynthesis; L-threonine biosynthesis; L-threonine from L-aspartate: step 2/5. Catalyzes the NADPH-dependent formation of L-aspartate-semialdehyde (L-ASA) by the reductive dephosphorylation of L-aspartyl-4-phosphate. The polypeptide is Aspartate-semialdehyde dehydrogenase (Corynebacterium melassecola).